Reading from the N-terminus, the 800-residue chain is Phenylalanine--tRNA ligase beta subunit (800 aa).

Residues 39-148 (TAALAPFVVG…ADTPVGVPLV (110 aa)) enclose the tRNA-binding domain. The B5 domain occupies 402–478 (VWRRTIALRP…RLHGFDLVPA (77 aa)). Mg(2+) contacts are provided by aspartate 456, aspartate 462, glutamate 465, and glutamate 466. Positions 706 to 799 (SPFQPVARDF…VTKLTGGSLR (94 aa)) constitute an FDX-ACB domain.

This sequence belongs to the phenylalanyl-tRNA synthetase beta subunit family. Type 1 subfamily. Tetramer of two alpha and two beta subunits. It depends on Mg(2+) as a cofactor.

The protein resides in the cytoplasm. The enzyme catalyses tRNA(Phe) + L-phenylalanine + ATP = L-phenylalanyl-tRNA(Phe) + AMP + diphosphate + H(+). This chain is Phenylalanine--tRNA ligase beta subunit, found in Rhodospirillum rubrum (strain ATCC 11170 / ATH 1.1.1 / DSM 467 / LMG 4362 / NCIMB 8255 / S1).